Here is a 945-residue protein sequence, read N- to C-terminus: Microtubule cross-linking factor 3 (945 aa).

Low complexity-rich tracts occupy residues 1 to 23 (MSQP…AAAT), 72 to 93 (QQQL…TSGT), and 110 to 126 (PKGA…GAEG). Residues 1-25 (MSQPPSGGAAPAATSASAAAAATEA) form the signal peptide. 4 disordered regions span residues 1-250 (MSQP…SYWK), 265-293 (KERA…PVAG), 307-366 (SPMA…TLKN), and 494-522 (LSLK…DNED). Positions 141 to 151 (GQPEEAPREIE) are enriched in basic and acidic residues. Positions 164-179 (GGVGGGGEGGGAGGGP) are enriched in gly residues. Residues 219–235 (TAATSKTPGPGSRNSGS) show a composition bias toward low complexity. Residues 236–247 (GSTGSGSGGGGS) show a composition bias toward gly residues. The span at 328-345 (AMQAAAPPSSQPHSQQLQ) shows a compositional bias: low complexity. Residues 340–724 (HSQQLQEQED…GKVMQLQYEN (385 aa)) are a coiled coil. Basic and acidic residues-rich tracts occupy residues 353–366 (EMEK…TLKN) and 494–511 (LSLK…EKKA). Phosphoserine is present on Ser567. The interval 741–811 (GIRGSPRDSD…PWPKSFSDRQ (71 aa)) is disordered. The segment covering 745–766 (SPRDSDAESDAGKKESDDDSRP) has biased composition (basic and acidic residues). Ser779 carries the phosphoserine modification. Residues 809-833 (DRQQMKDIRSEAERLGKTIDRLIAD) are a coiled coil. A helical membrane pass occupies residues 913-933 (PIILLILILVLFSSLSYTTIF).

This sequence belongs to the MTCL family.

It localises to the membrane. The polypeptide is Microtubule cross-linking factor 3 (Mtcl3) (Mus musculus (Mouse)).